Here is a 254-residue protein sequence, read N- to C-terminus: 4-hydroxy-tetrahydrodipicolinate reductase (254 aa).

NAD(+) is bound by residues 10-15 and 101-103; these read GATGKV and GTT. His-157 acts as the Proton donor/acceptor in catalysis. His-158 lines the (S)-2,3,4,5-tetrahydrodipicolinate pocket. Lys-161 serves as the catalytic Proton donor. Residue 167 to 168 participates in (S)-2,3,4,5-tetrahydrodipicolinate binding; that stretch reads GT.

Belongs to the DapB family.

The protein localises to the cytoplasm. The enzyme catalyses (S)-2,3,4,5-tetrahydrodipicolinate + NAD(+) + H2O = (2S,4S)-4-hydroxy-2,3,4,5-tetrahydrodipicolinate + NADH + H(+). It catalyses the reaction (S)-2,3,4,5-tetrahydrodipicolinate + NADP(+) + H2O = (2S,4S)-4-hydroxy-2,3,4,5-tetrahydrodipicolinate + NADPH + H(+). Its pathway is amino-acid biosynthesis; L-lysine biosynthesis via DAP pathway; (S)-tetrahydrodipicolinate from L-aspartate: step 4/4. Its function is as follows. Catalyzes the conversion of 4-hydroxy-tetrahydrodipicolinate (HTPA) to tetrahydrodipicolinate. This Symbiobacterium thermophilum (strain DSM 24528 / JCM 14929 / IAM 14863 / T) protein is 4-hydroxy-tetrahydrodipicolinate reductase.